The primary structure comprises 330 residues: Putative glycosyltransferase HI_0258 (330 aa).

Residues M1–D31 show a composition bias toward basic and acidic residues. A disordered region spans residues M1–G32. Residues S44 to Y49 and D140 to V141 each bind UDP. D140, D142, and H270 together coordinate Mn(2+). H270 to K276 lines the UDP pocket.

This sequence belongs to the glycosyltransferase 8 family.

This chain is Putative glycosyltransferase HI_0258, found in Haemophilus influenzae (strain ATCC 51907 / DSM 11121 / KW20 / Rd).